A 201-amino-acid chain; its full sequence is Ras-related protein Rab-9B (201 aa).

GTP is bound by residues valine 18, glycine 19, lysine 20, serine 21, serine 22, aspartate 33, serine 34, alanine 36, histidine 38, and threonine 39. Serine 21 contributes to the Mg(2+) binding site. The Switch 1 signature appears at lysine 31–valine 42. Residue serine 34 is modified to Phosphoserine. Mg(2+)-binding residues include threonine 39 and aspartate 62. The Switch 2 signature appears at alanine 64–arginine 78. Glycine 65, asparagine 124, lysine 125, alanine 155, and lysine 156 together coordinate GTP. 2 S-geranylgeranyl cysteine lipidation sites follow: cysteine 200 and cysteine 201.

Belongs to the small GTPase superfamily. Rab family. As to quaternary structure, interacts (GTP-bound form) with SGSM1; the GDP-bound form has much lower affinity for SGSM1. The GTP-bound form but not the GDP-bound form interacts with HPS4 and the BLOC-3 complex (heterodimer of HPS1 and HPS4) but does not interact with HPS1 alone. Interacts (GTP-bound form) with NDE1. The cofactor is Mg(2+). As to expression, ubiquitous.

The protein resides in the cell membrane. Its subcellular location is the cytoplasmic vesicle. The protein localises to the phagosome. It localises to the phagosome membrane. The enzyme catalyses GTP + H2O = GDP + phosphate + H(+). Regulated by guanine nucleotide exchange factors (GEFs) which promote the exchange of bound GDP for free GTP. Regulated by GTPase activating proteins (GAPs) which increase the GTP hydrolysis activity. Inhibited by GDP dissociation inhibitors (GDIs). The small GTPases Rab are key regulators of intracellular membrane trafficking, from the formation of transport vesicles to their fusion with membranes. Rabs cycle between an inactive GDP-bound form and an active GTP-bound form that is able to recruit to membranes different sets of downstream effectors directly responsible for vesicle formation, movement, tethering and fusion. RAB9B is involved in the transport of proteins between the endosomes and the trans Golgi network. May use NDE1/NDEL1 as an effector to interact with the dynein motor complex in order to control retrograde trafficking of RAB9-associated late endosomes to the TGN. This is Ras-related protein Rab-9B from Homo sapiens (Human).